A 309-amino-acid polypeptide reads, in one-letter code: Taste receptor type 2 member 105 (309 aa).

The Extracellular portion of the chain corresponds to 1-9 (MLSAAEGIL). A helical transmembrane segment spans residues 10 to 32 (LSIATVEAGLGVLGNTFIALVNC). The Cytoplasmic portion of the chain corresponds to 33-44 (MDWAKNKKLSKI). Residues 45–67 (GFLLFGLATSRIFIVWILILDAY) form a helical membrane-spanning segment. Over 68–86 (AKLFFPGKYLSKSLTEIIS) the chain is Extracellular. Residues 87-109 (CIWMTVNHMTVWFATSLSIFYFL) form a helical membrane-spanning segment. The Cytoplasmic segment spans residues 110–129 (KIANFSHYIFLWLKRRTDKV). The helical transmembrane segment at 130-149 (FAFLLWCLLISWAISFSFTV) threads the bilayer. Residues 150-177 (KVMKSNPKNHGNRTSGTHWEKREFTSNY) are Extracellular-facing. Asn161 is a glycosylation site (N-linked (GlcNAc...) asparagine). The helical transmembrane segment at 178–200 (VLINIGVISLLIMTLTACFLLII) threads the bilayer. The Cytoplasmic segment spans residues 201–226 (SLWKHSRQMQSNVSGFRDLNTEAHVK). The chain crosses the membrane as a helical span at residues 227-249 (AIKFLISFIILFILYFIGVAVEI). At 250–258 (ICMFIPENK) the chain is on the extracellular side. The helical transmembrane segment at 259–281 (LLFIFGLTTASVYPCCHSVILIL) threads the bilayer. Residues 282-309 (TNSQLKQAFVKVLEGLKFSENGKDLRAT) lie on the Cytoplasmic side of the membrane.

Belongs to the G-protein coupled receptor T2R family. In terms of tissue distribution, expressed in subsets of taste receptor cells of the tongue and palate epithelium and exclusively in gustducin-positive cells. Expressed in 15% taste bud cells in circumvallate and foliate papillae but only in 2% in fungiform papillae. Expressed in the duodenum, antrum and fundus (part of the stomach).

The protein resides in the membrane. Gustducin-coupled cycloheximide receptor implicated in the perception of bitter compounds in the oral cavity and the gastrointestinal tract. Signals through PLCB2 and the calcium-regulated cation channel TRPM5. In Rattus norvegicus (Rat), this protein is Taste receptor type 2 member 105 (Tas2r105).